The chain runs to 217 residues: U2 snRNP component ist3 (217 aa).

Residues 31–109 (AYIYIGNLDF…RLVRVDHVAS (79 aa)) enclose the RRM domain. 2 disordered regions span residues 119 to 138 (PANLVPLGESGSSLSVSTIN) and 154 to 217 (EVEQ…DLDG). A compositionally biased stretch (polar residues) spans 128-138 (SGSSLSVSTIN). Phosphoserine is present on serine 160. Basic and acidic residues-rich tracts occupy residues 161 to 176 (PKDEKDLLDPMRDYIH) and 185 to 198 (HESSDRSDKSDSNR). Over residues 199-217 (HSRHHRRHSRSRRHRDLDG) the composition is skewed to basic residues.

This sequence belongs to the IST3 family. Belongs to the 40S cdc5-associated complex (or cwf complex), a spliceosome sub-complex reminiscent of a late-stage spliceosome composed of the U2, U5 and U6 snRNAs and at least brr2, cdc5, cwf2/prp3, cwf3/syf1, cwf4/syf3, cwf5/ecm2, spp42/cwf6, cwf7/spf27, cwf8, cwf9, cwf10, cwf11, cwf12, prp45/cwf13, cwf14, cwf15, cwf16, cwf17, cwf18, cwf19, cwf20, cwf21, cwf22, cwf23, cwf24, cwf25, cwf26, cyp7/cwf27, cwf28, cwf29/ist3, lea1, msl1, prp5/cwf1, prp10, prp12/sap130, prp17, prp22, sap61, sap62, sap114, sap145, slu7, smb1, smd1, smd3, smf1, smg1 and syf2.

It localises to the nucleus. Its function is as follows. Required for pre-mRNA splicing and spliceosome assembly. The sequence is that of U2 snRNP component ist3 (cwf29) from Schizosaccharomyces pombe (strain 972 / ATCC 24843) (Fission yeast).